The primary structure comprises 1006 residues: Phosphatidylinositol 4,5-bisphosphate 5-phosphatase A (1006 aa).

A disordered region spans residues 1–416; that stretch reads MEGQSSRGSR…SSSPWSAQPT (416 aa). A compositionally biased stretch (polar residues) spans 27 to 41; the sequence is VAQTGAPSKVDSSFQ. Arginine 56 is subject to Asymmetric dimethylarginine; alternate. At arginine 56 the chain carries Omega-N-methylarginine; alternate. An Omega-N-methylarginine modification is found at arginine 65. Arginine 76 bears the Asymmetric dimethylarginine mark. The residue at position 83 (arginine 83) is an Asymmetric dimethylarginine; alternate. Arginine 83 carries the post-translational modification Omega-N-methylarginine; alternate. The span at 94-112 shows a compositional bias: polar residues; sequence GQKTATAHRSSSLAPTSVG. Residues 102 to 107 carry the RSXSXX motif 1 motif; that stretch reads RSSSLA. The span at 180–193 shows a compositional bias: low complexity; it reads LAASGLSLALASEE. The span at 196–209 shows a compositional bias: pro residues; that stretch reads PELPSTPSPVPSPV. Residues 210 to 234 show a composition bias toward low complexity; sequence LSPTQEQALAPASTASGAASVGQTS. The span at 256-273 shows a compositional bias: polar residues; sequence PAQTSGPTGSPPCIQTSP. Phosphoserine occurs at positions 291 and 324. Pro residues predominate over residues 337 to 347; it reads VPPPLPKPPRS. An SH3-binding motif is present at residues 345-350; it reads PRSPSR. Low complexity-rich tracts occupy residues 348–360 and 398–409; these read PSRSPSHSPNRSP and TTSSSTSTLSSS. The RSXSXX motif 2 motif lies at 350 to 355; sequence RSPSHS. The segment at 425 to 728 is catalytic; it reads ITVVTWNVGT…SDHKPVAAQF (304 aa). The interval 729–840 is required for ruffle localization; the sequence is LLQFAFRDDM…IGITEPFQIS (112 aa). The span at 844–858 shows a compositional bias: low complexity; sequence SELASSSTDSSGTSS. Positions 844 to 1006 are disordered; it reads SELASSSTDS…RGLEEGGLGP (163 aa). Short sequence motifs (RSXSXX motif) lie at residues 874-879 and 885-890; these read RSPSPG and RSRSPG. At serine 903 the chain carries Phosphoserine. The short motif at 911–916 is the RSXSXX motif 5 element; the sequence is RSPSPQ. Residues 927-946 show a composition bias toward low complexity; that stretch reads RSSNGSSRGSSEEGPSGLPG. A Phosphoserine modification is found at serine 990.

It belongs to the inositol 1,4,5-trisphosphate 5-phosphatase type II family.

It is found in the cytoplasm. It catalyses the reaction 1D-myo-inositol 1,4,5-trisphosphate + H2O = 1D-myo-inositol 1,4-bisphosphate + phosphate. It carries out the reaction 1D-myo-inositol 1,3,4,5-tetrakisphosphate + H2O = 1D-myo-inositol 1,3,4-trisphosphate + phosphate. The catalysed reaction is a 1,2-diacyl-sn-glycero-3-phospho-(1D-myo-inositol-4,5-bisphosphate) + H2O = a 1,2-diacyl-sn-glycero-3-phospho-(1D-myo-inositol 4-phosphate) + phosphate. Its function is as follows. Inositol 5-phosphatase, which converts inositol 1,4,5-trisphosphate to inositol 1,4-bisphosphate. Also converts phosphatidylinositol 4,5-bisphosphate to phosphatidylinositol 4-phosphate and inositol 1,3,4,5-tetrakisphosphate to inositol 1,3,4-trisphosphate in vitro. May be involved in modulation of the function of inositol and phosphatidylinositol polyphosphate-binding proteins that are present at membranes ruffles. This chain is Phosphatidylinositol 4,5-bisphosphate 5-phosphatase A (INPP5J), found in Homo sapiens (Human).